Consider the following 260-residue polypeptide: NAD kinase (260 aa).

The active-site Proton acceptor is D49. NAD(+) contacts are provided by residues 49–50, 119–120, D149, A157, and 160–165; these read DG, NE, and TAYNLS.

It belongs to the NAD kinase family. A divalent metal cation is required as a cofactor.

The protein resides in the cytoplasm. The catalysed reaction is NAD(+) + ATP = ADP + NADP(+) + H(+). Involved in the regulation of the intracellular balance of NAD and NADP, and is a key enzyme in the biosynthesis of NADP. Catalyzes specifically the phosphorylation on 2'-hydroxyl of the adenosine moiety of NAD to yield NADP. The chain is NAD kinase from Caulobacter vibrioides (strain ATCC 19089 / CIP 103742 / CB 15) (Caulobacter crescentus).